Consider the following 439-residue polypeptide: Na(+)/H(+) antiporter NhaA (439 aa).

A run of 11 helical transmembrane segments spans residues 12–32, 67–87, 103–123, 133–153, 162–182, 186–206, 214–234, 314–334, 341–361, 379–399, and 412–432; these read SMNI…AIIA, MIEF…GLEI, ALPF…YMSI, GLAI…SLLG, IFLT…IALF, HVSY…YFIG, IFFL…GIHS, ILPL…GELV, VAAG…WLAI, GIAL…NLSF, and FGVL…LRIV.

This sequence belongs to the NhaA Na(+)/H(+) (TC 2.A.33) antiporter family.

Its subcellular location is the cell inner membrane. It catalyses the reaction Na(+)(in) + 2 H(+)(out) = Na(+)(out) + 2 H(+)(in). Functionally, na(+)/H(+) antiporter that extrudes sodium in exchange for external protons. The chain is Na(+)/H(+) antiporter NhaA from Bacteroides thetaiotaomicron (strain ATCC 29148 / DSM 2079 / JCM 5827 / CCUG 10774 / NCTC 10582 / VPI-5482 / E50).